Consider the following 187-residue polypeptide: Probable chorismate pyruvate-lyase (187 aa).

Substrate is bound by residues Arg80, Leu117, and Glu176.

It belongs to the UbiC family.

Its subcellular location is the cytoplasm. The catalysed reaction is chorismate = 4-hydroxybenzoate + pyruvate. It participates in cofactor biosynthesis; ubiquinone biosynthesis. In terms of biological role, removes the pyruvyl group from chorismate, with concomitant aromatization of the ring, to provide 4-hydroxybenzoate (4HB) for the ubiquinone pathway. The chain is Probable chorismate pyruvate-lyase from Halorhodospira halophila (strain DSM 244 / SL1) (Ectothiorhodospira halophila (strain DSM 244 / SL1)).